The primary structure comprises 326 residues: uncharacterized protein (326 aa).

A run of 2 helical transmembrane segments spans residues 9–29 (WVVL…RWSL) and 33–53 (ISIC…ANSY). Residues D120, N148, Y214, K218, and T252 each coordinate NADP(+). Y214 (proton acceptor) is an active-site residue. The active-site Lowers pKa of active site Tyr is the K218.

It belongs to the short-chain dehydrogenases/reductases (SDR) family.

It localises to the mitochondrion membrane. Functionally, involved in the resistance to DNA-damaging agents. This is an uncharacterized protein from Saccharomyces cerevisiae (strain ATCC 204508 / S288c) (Baker's yeast).